Reading from the N-terminus, the 250-residue chain is 2,5-dichloro-2,5-cyclohexadiene-1,4-diol dehydrogenase (250 aa).

Position 9–34 (9–34 (IIVTGGGSGIGRATVELLVASGANVA)) interacts with NAD(+). Ser141 contributes to the substrate binding site. The Proton acceptor role is filled by Tyr154.

Belongs to the short-chain dehydrogenases/reductases (SDR) family.

The catalysed reaction is 2,5-dichlorocyclohexa-2,5-dien-1,4-diol + NAD(+) = 2,5-dichlorohydroquinone + NADH + H(+). It functions in the pathway xenobiotic degradation; gamma-hexachlorocyclohexane degradation. In terms of biological role, catalyzes the dehydrogenation of 2,5-dichloro-2,5-cyclohexadiene-1,4-diol (2,5-DDOL) to 2,5-dichlorohydroquinone (2,5-DCHQ), a step in the degradation of gamma-hexachlorocyclohexane (gamma-HCH or lindane). Has an essential role in this assimilation pathway that allows S.japonicum UT26 to grow on gamma-HCH as the sole source of carbon and energy. The protein is 2,5-dichloro-2,5-cyclohexadiene-1,4-diol dehydrogenase of Sphingobium indicum (strain DSM 16413 / CCM 7287 / MTCC 6362 / UT26 / NBRC 101211 / UT26S) (Sphingobium japonicum).